A 241-amino-acid chain; its full sequence is Uridylate kinase (241 aa).

15–18 (KLSG) lines the ATP pocket. The involved in allosteric activation by GTP stretch occupies residues 23–28 (GSEGFG). A UMP-binding site is contributed by Gly57. ATP contacts are provided by Gly58 and Arg62. UMP contacts are provided by residues Asp77 and 138–145 (TGNPFFTT). Positions 165, 171, and 174 each coordinate ATP.

The protein belongs to the UMP kinase family. As to quaternary structure, homohexamer.

Its subcellular location is the cytoplasm. It carries out the reaction UMP + ATP = UDP + ADP. It functions in the pathway pyrimidine metabolism; CTP biosynthesis via de novo pathway; UDP from UMP (UMPK route): step 1/1. With respect to regulation, allosterically activated by GTP. Inhibited by UTP. Its function is as follows. Catalyzes the reversible phosphorylation of UMP to UDP. This Vibrio vulnificus (strain CMCP6) protein is Uridylate kinase.